A 995-amino-acid polypeptide reads, in one-letter code: Probable copper-transporting ATPase HMA5 (995 aa).

Residues 1-299 (MATKLLSLTC…QGEIKQYYKS (299 aa)) lie on the Cytoplasmic side of the membrane. HMA domains are found at residues 51–117 (SRAV…FEAS) and 129–195 (QVCR…FEAV). Residues Cys62, Cys65, Cys140, and Cys143 each contribute to the Cu(+) site. Residues 204–270 (SKIDLKIDGE…VIESTVFGHS (67 aa)) form the HMA 3; degenerate domain. The helical transmembrane segment at 300–321 (FLWSLVFTVPVFLTAMVFMYIP) threads the bilayer. Over 322-340 (GIKDLLMFKVINMLTVGEI) the chain is Extracellular. Residues 341-360 (IRCVLATPVQFVIGWRFYTG) traverse the membrane as a helical segment. The Cytoplasmic portion of the chain corresponds to 361–367 (SYKALRR). The helical transmembrane segment at 368-388 (GSANMDVLIALGTNAAYFYSL) threads the bilayer. Residues 389-406 (YTVLRAATSPDFKGVDFF) lie on the Extracellular side of the membrane. Residues 407–427 (ETSAMLISFIILGKYLEVMAK) form a helical membrane-spanning segment. Residues 428–561 (GKTSQAIAKL…KAPVQKLADR (134 aa)) lie on the Cytoplasmic side of the membrane. A helical transmembrane segment spans residues 562–584 (ISKFFVPLVIFLSFSTWLAWFLA). Topologically, residues 585-605 (GKLHWYPESWIPSSMDSFELA) are extracellular. Residues 606 to 623 (LQFGISVMVIACPCALGL) form a helical membrane-spanning segment. Residues 624–920 (ATPTAVMVGT…DLSRKTFSRI (297 aa)) are Cytoplasmic-facing. The active-site 4-aspartylphosphate intermediate is Asp661. The Mg(2+) site is built by Asp866 and Asp870. Residues 921 to 940 (RLNYVWALGYNLMGIPIAAG) traverse the membrane as a helical segment. The Extracellular portion of the chain corresponds to 941–952 (VLFPGTRFRLPP). Residues 953–971 (WIAGAAMAASSVSVVCCSL) form a helical membrane-spanning segment. Over 972–995 (LLKNYKRPKKLDHLEIREIQVERV) the chain is Cytoplasmic.

Belongs to the cation transport ATPase (P-type) (TC 3.A.3) family. Type IB subfamily. As to quaternary structure, interacts with ATX1. In terms of tissue distribution, expressed in roots and flowers.

It localises to the membrane. It carries out the reaction Cu(+)(in) + ATP + H2O = Cu(+)(out) + ADP + phosphate + H(+). Its function is as follows. Involved in copper import into the cell. May play a role in copper detoxification in roots. This Arabidopsis thaliana (Mouse-ear cress) protein is Probable copper-transporting ATPase HMA5 (HMA5).